Reading from the N-terminus, the 621-residue chain is MALLQIAEPGQSPQPHQRRLAVGIDLGTTNSLVAALRSGLSEPLADAEGRVILPSAVRYHADRVEVGESAKLAASSDPLNTVLSVKRLMGRGLSDVKQLGDQLPYRFVGGESHMPFIDTVQGPKSPVEVSADILKVLRQRAEATLGGELVGAVITVPAYFDDAQRQATKDAAKLAGLNVLRLLNEPTAAAVAYGLDQHAEGLVAIYDLGGGTFDISILRLTGGVFEVLATGGDSALGGDDFDHAIAGWIIESASLSADLDPGAQRSLLQAACAAKEALTDSDSVEVAYGDWKAQLTREAFDALIEPMVARSLKACRRAVRDSGVELEDVHAVVMVGGSTRVPRVREAVAEAFGRQPLTEIDPDQVVAIGAAIQADTLAGNKRDGGELLLLDVIPLSLGLETMGGLMEKVIPRNTTIPVARAQDFTTYKDGQSAMAIHVLQGERELISDCRSLARFELRGIPAMVAGAAKIRVTFQVDADGLLSVSARELGSGVEASIQVKPSYGLTDGEIAKMLKDSFQHANDDKVARVLREQQVDAQRLIEAVQGALEADGERLLDAEERMVIDLQVQELTELMKGTDGYAIEQQTKRLSQVTDAFAARRMDQTVKAALSGRNLNEIEDI.

It belongs to the heat shock protein 70 family.

In terms of biological role, chaperone involved in the maturation of iron-sulfur cluster-containing proteins. Has a low intrinsic ATPase activity which is markedly stimulated by HscB. The sequence is that of Chaperone protein HscA homolog from Pseudomonas fluorescens (strain Pf0-1).